Here is a 259-residue protein sequence, read N- to C-terminus: Flap endonuclease Xni (259 aa).

Residue aspartate 109 participates in Mg(2+) binding. A 5'-3' exonuclease domain is found at valine 165–alanine 255. Leucine 176, isoleucine 187, and isoleucine 190 together coordinate K(+). Positions glycine 189 to alanine 194 are interaction with DNA.

It belongs to the Xni family. Requires Mg(2+) as cofactor. It depends on K(+) as a cofactor.

Has flap endonuclease activity. During DNA replication, flap endonucleases cleave the 5'-overhanging flap structure that is generated by displacement synthesis when DNA polymerase encounters the 5'-end of a downstream Okazaki fragment. The protein is Flap endonuclease Xni of Vibrio vulnificus (strain YJ016).